The chain runs to 417 residues: NADH-quinone oxidoreductase subunit D (417 aa).

This sequence belongs to the complex I 49 kDa subunit family. As to quaternary structure, NDH-1 is composed of 14 different subunits. Subunits NuoB, C, D, E, F, and G constitute the peripheral sector of the complex.

Its subcellular location is the cell inner membrane. The enzyme catalyses a quinone + NADH + 5 H(+)(in) = a quinol + NAD(+) + 4 H(+)(out). Its function is as follows. NDH-1 shuttles electrons from NADH, via FMN and iron-sulfur (Fe-S) centers, to quinones in the respiratory chain. The immediate electron acceptor for the enzyme in this species is believed to be ubiquinone. Couples the redox reaction to proton translocation (for every two electrons transferred, four hydrogen ions are translocated across the cytoplasmic membrane), and thus conserves the redox energy in a proton gradient. This is NADH-quinone oxidoreductase subunit D from Ralstonia pickettii (strain 12J).